The sequence spans 166 residues: MAEVSKKRCEHNSDSQCEGCKANDKACEARDKTKETAGSAKDKTKETAGSAKDKTKETAESAKDKTKETAGSAKDKTKETAESAKDKTKETAGSAKDKTKETAESAKDKTKETAGNVRDNVENKDKNEVYENIKEGGSKAWNKTKEVANSMKDGIKDLANKDEQKK.

Basic and acidic residues-rich tracts occupy residues 1–13 (MAEVSKKRCEHNS), 21–112 (KAND…KTKE), and 119–137 (DNVENKDKNEVYENIKEGG). The interval 1–144 (MAEVSKKRCE…EGGSKAWNKT (144 aa)) is disordered. Repeat copies occupy residues 31–41 (DKTKETAGSAK), 42–52 (DKTKETAGSAK), 53–63 (DKTKETAESAK), 64–74 (DKTKETAGSAK), 75–85 (DKTKETAESAK), 86–96 (DKTKETAGSAK), 97–107 (DKTKETAESAK), and 108–118 (DKTKETAGNVR). The interval 31–118 (DKTKETAGSA…KTKETAGNVR (88 aa)) is 8 X 11 AA approximate tandem repeats of D-K-T-K-E-T-A-G/E-S-A-K.

It belongs to the LEA type 1 family.

This is an uncharacterized protein from Encephalitozoon cuniculi (strain GB-M1) (Microsporidian parasite).